We begin with the raw amino-acid sequence, 1217 residues long: MTIPEKPQGVIWTDAQWQSIYATGQDVLVAAAAGSGKTAVLVERIIQKILRDGIDVDRLLVVTFTNLSAREMKHRVDQRIQEASIADPANAHLKNQRIKIHQAQISTLHSFCLKLIQQHYDVLNIDPNFRTSSEAENILLLEQTIDEVIEQHYDILDPAFIELTEQLSSDRSDDQFRMIIKQLYFFSVANPNPKNWLDQLVTPYEEEAQQAQLIQLLTDLSKVFITAAYDALNKAYDLFSMMDSVDKHLAVIEDERRLMGRVLEGGFIDIPYLTGHEFGARLPNVTAKIKEANEMMVDALEDAKLQYKKYKSLIDKVKSDYFSREADDLKADMQQLAPRVKYLARIVKDVMSEFNRKKRSKNILDFSDYEHFALQILTNEDGSPSEIAESYRQHFQEILVDEYQDTNRVQEKILSCIKTGDEHNGNLFMVGDVKQSIYKFRQADPSLFIEKYQRFTIDGDGTGRRIDLSQNFRSRKEVLSTTNYIFKHMMDEQVGEVKYDEAAQLYYGAPYDESDHPVNLKVLVEADQEHSDLTGSEQEAHFIVEQVKDILEHQKVYDMKTGSYRSATYKDIVILERSFGQARNLQQAFKNEDIPFHVNSREGYFEQTEVRLVLSFLRAIDNPLQDIYLVGLMRSVIYQFKEDELAQIRILSPNDDYFYQSIVNYINDEAADAILVDKLKMFLSDIQSYQQYSKDHPVYQLIDKFYNDHYVIQYFSGLIGGRGRRANLYGLFNKAIEFENSSFRGLYQFIRFIDELIERGKDFGEENVVGPNDNVVRMMTIHSSKGLEFPFVIYSGLSKDFNKRDLKQPVILNQQFGLGMDYFDVDKEMAFPSLASVAYRAVAEKELVSEEMRLVYVALTRAKEQLYLIGRVKNDKSLLELEQLSISGEHIAVNERLTSPNPFHLIYSILSKHQSASIPDDLKFEKDIAQIEDSSRPNVNISIVYFEDVSTETILDNDEYRSVNQLETMQNGNEDVKAQIKHQLDYRYPYVNDTKKPSKQSVSELKRQYETEESGTSYERVRQYRIGFSTYERPKFLSEQGKRKANEIGTLMHTVMQHLPFKKERISEVELHQYIDGLIDKHIIEADAKKDIRMDEIMTFINSELYSIIAEAEQVYRELPFVVNQALVDQLPQGDEDVSIIQGMIDLIFVKDGVHYFVDYKTDAFNRRRGMTDEEIGTQLKNKYKIQMKYYQNTLQTILNKEVKGYLYFFKFGTLQL.

The UvrD-like helicase ATP-binding domain occupies 10-475 (VIWTDAQWQS…IDLSQNFRSR (466 aa)). 31 to 38 (AAAGSGKT) is an ATP binding site. Positions 476-786 (KEVLSTTNYI…RMMTIHSSKG (311 aa)) constitute a UvrD-like helicase C-terminal domain.

This sequence belongs to the helicase family. AddA subfamily. As to quaternary structure, heterodimer of AddA and AddB/RexB. The cofactor is Mg(2+).

It catalyses the reaction Couples ATP hydrolysis with the unwinding of duplex DNA by translocating in the 3'-5' direction.. It carries out the reaction ATP + H2O = ADP + phosphate + H(+). In terms of biological role, the heterodimer acts as both an ATP-dependent DNA helicase and an ATP-dependent, dual-direction single-stranded exonuclease. Recognizes the chi site generating a DNA molecule suitable for the initiation of homologous recombination. The AddA nuclease domain is required for chi fragment generation; this subunit has the helicase and 3' -&gt; 5' nuclease activities. This Staphylococcus aureus (strain USA300) protein is ATP-dependent helicase/nuclease subunit A.